A 205-amino-acid chain; its full sequence is MDIMKDKIRQALSELDILATEVQIDQWLDYLKLLEKWNKVYNMTAIKNIDEMLVKHLFDSLAVAKYIKGDSTVDVGTGGGLPGVVLAILYPQHQFTLVDSVGKKIMFLKNVKKSLSLNNINPLNTRIENLEGNFDNIISRAFSSVDTFYELCKHFLTEHNQMLAMKGRDLEERNLESLPLNIEKYSIKVPFLNAERNLIVIRKKL.

S-adenosyl-L-methionine contacts are provided by residues Gly76, Leu81, 127–128 (IE), and Arg140.

The protein belongs to the methyltransferase superfamily. RNA methyltransferase RsmG family.

It is found in the cytoplasm. It catalyses the reaction guanosine(527) in 16S rRNA + S-adenosyl-L-methionine = N(7)-methylguanosine(527) in 16S rRNA + S-adenosyl-L-homocysteine. Functionally, specifically methylates the N7 position of guanine in position 527 of 16S rRNA. The protein is Ribosomal RNA small subunit methyltransferase G of Francisella tularensis subsp. tularensis (strain FSC 198).